Here is a 95-residue protein sequence, read N- to C-terminus: Protein YY1 (95 aa).

An N-terminal signal peptide occupies residues 1–26; it reads MAVTRTALLVVLVAGAMTMTMRGAEA. Intrachain disulfides connect Cys31-Cys72, Cys41-Cys61, Cys62-Cys87, and Cys74-Cys94.

It belongs to the A9/FIL1 family. In terms of tissue distribution, anther.

The protein localises to the secreted. This Oryza sativa subsp. japonica (Rice) protein is Protein YY1.